The sequence spans 291 residues: Co-chaperone protein DjlA (291 aa).

Residues 1–6 (MRYWGK) lie on the Periplasmic side of the membrane. A helical transmembrane segment spans residues 7-31 (LLGLALGIVSSTGIWGMIMGLLMGH). Topologically, residues 32–291 (WIDRARASRR…ELLKSANQTK (260 aa)) are cytoplasmic. The interval 177–223 (ESPTGQQSRQNQSRQNGKSQQRRNNGYSNGHSYGGQRPPSPLRGPTV) is disordered. Low complexity predominate over residues 181–211 (GQQSRQNQSRQNGKSQQRRNNGYSNGHSYGG). Residues 225 to 291 (SACRTLGVRS…ELLKSANQTK (67 aa)) form the J domain.

As to quaternary structure, homodimer.

Its subcellular location is the cell inner membrane. Its function is as follows. Regulatory DnaK co-chaperone. Direct interaction between DnaK and DjlA is needed for the induction of the wcaABCDE operon, involved in the synthesis of a colanic acid polysaccharide capsule, possibly through activation of the RcsB/RcsC phosphotransfer signaling pathway. The colanic acid capsule may help the bacterium survive conditions outside the host. The chain is Co-chaperone protein DjlA from Pectobacterium atrosepticum (strain SCRI 1043 / ATCC BAA-672) (Erwinia carotovora subsp. atroseptica).